Consider the following 486-residue polypeptide: Arginine deiminase (486 aa).

Cys476 functions as the Amidino-cysteine intermediate in the catalytic mechanism.

The protein belongs to the arginine deiminase family.

The protein resides in the cytoplasm. The enzyme catalyses L-arginine + H2O = L-citrulline + NH4(+). It functions in the pathway amino-acid degradation; L-arginine degradation via ADI pathway; carbamoyl phosphate from L-arginine: step 1/2. Involved in the arginine deiminase pathway of fermentative arginine utilization. The sequence is that of Arginine deiminase (arcA) from Halobacterium salinarum (strain ATCC 29341 / DSM 671 / R1).